The chain runs to 510 residues: NAD(P)H-quinone oxidoreductase subunit 2 A, chloroplastic (510 aa).

13 consecutive transmembrane segments (helical) span residues Leu-24–Leu-44, Ile-57–Phe-77, Ile-99–Ile-119, Met-124–Cys-144, Leu-149–Tyr-169, Tyr-183–Gly-203, Pro-227–Ala-247, Trp-295–Ile-315, Met-323–Asp-343, Tyr-354–Leu-374, Ala-395–Phe-415, Ile-418–Leu-438, and Met-484–Ile-504.

Belongs to the complex I subunit 2 family. NDH is composed of at least 16 different subunits, 5 of which are encoded in the nucleus.

It is found in the plastid. Its subcellular location is the chloroplast thylakoid membrane. The enzyme catalyses a plastoquinone + NADH + (n+1) H(+)(in) = a plastoquinol + NAD(+) + n H(+)(out). It catalyses the reaction a plastoquinone + NADPH + (n+1) H(+)(in) = a plastoquinol + NADP(+) + n H(+)(out). Functionally, NDH shuttles electrons from NAD(P)H:plastoquinone, via FMN and iron-sulfur (Fe-S) centers, to quinones in the photosynthetic chain and possibly in a chloroplast respiratory chain. The immediate electron acceptor for the enzyme in this species is believed to be plastoquinone. Couples the redox reaction to proton translocation, and thus conserves the redox energy in a proton gradient. In Spinacia oleracea (Spinach), this protein is NAD(P)H-quinone oxidoreductase subunit 2 A, chloroplastic.